The following is a 366-amino-acid chain: Inhibin alpha chain (366 aa).

Residues 1–20 (MVIQPSLLLLLLLTLQDVDS) form the signal peptide. Residues 21-63 (CQGPELVRELVLAKVKALFLDALGPPAMDGEGGGPGIRRLPRR) constitute a propeptide that is removed on maturation. The propeptide at 64-233 (HALGGFMHRT…APSAGERARR (170 aa)) is inhibin alpha N-terminal region. Asn-147 and Asn-269 each carry an N-linked (GlcNAc...) asparagine glycan. 3 disulfides stabilise this stretch: Cys-263/Cys-328, Cys-292/Cys-363, and Cys-296/Cys-365.

It belongs to the TGF-beta family. Dimeric, linked by one or more disulfide bonds. Activin B is a dimer of alpha and beta-B. Inhibin A is a dimer of alpha and beta-A. Inhibin B is a dimer of alpha and beta-B. Interacts with TGFBR3L; this interaction regulates female fertility. In terms of processing, proteolytic processing yields a number of bioactive forms, consisting either solely of the mature alpha chain, of the most N-terminal propeptide linked through a disulfide bond to the mature alpha chain, or of the entire proprotein. As to expression, mainly expressed in ovary and testis. Alpha- and beta-B-subunits are the predominant forms found in testis. Also found in placenta, pituitary, adrenal gland, bone marrow, kidney, spinal cord and brain.

The protein resides in the secreted. Functionally, inhibins and activins inhibit and activate, respectively, the secretion of follitropin by the pituitary gland. Inhibins/activins are involved in regulating a number of diverse functions such as hypothalamic and pituitary hormone secretion, gonadal hormone secretion, germ cell development and maturation, erythroid differentiation, insulin secretion, nerve cell survival, embryonic axial development or bone growth, depending on their subunit composition. Inhibins appear to oppose the functions of activins. In terms of biological role, inhibin A is a dimer of alpha/INHA and beta-A/INHBA that functions as a feedback regulator in the hypothalamic-pituitary-gonadal (HPG) axis. Inhibits the secretion of FSH from the anterior pituitary gland by acting on pituitary gonadotrope cells. Antagonizes activin A by binding to the proteoglycan, betaglycan, and forming a stable complex with and, thereby, sequestering type II activin receptors while excluding type I receptor. Its function is as follows. Inhibin B is a dimer of alpha and beta-B that plays a crucial role in the regulation of the reproductive system by inhibiting the secretion of follicle-stimulating hormone (FSH) from the anterior pituitary gland. Thereby, maintains reproductive homeostasis in both males and females. Acts as a more potent suppressor of FSH release than inhibin A. Functions as competitive receptor antagonist binding activin type II receptors with high affinity in the presence of the TGF-beta type III coreceptor/TGFBR3L. This Rattus norvegicus (Rat) protein is Inhibin alpha chain (Inha).